A 360-amino-acid polypeptide reads, in one-letter code: Phospho-N-acetylmuramoyl-pentapeptide-transferase (360 aa).

A run of 10 helical transmembrane segments spans residues 21–41 (YLSF…LWMG), 73–93 (TMGG…WADL), 94–114 (TNPY…VGFV), 132–152 (WKYF…YAHG), 168–188 (VMPQ…VGTS), 199–219 (GLAI…AWAT), 239–259 (LVVV…FNTY), 263–283 (VFMG…IAVL), 288–308 (FVLV…ILQV), and 338–358 (VIVR…ATLK).

Belongs to the glycosyltransferase 4 family. MraY subfamily. The cofactor is Mg(2+).

The protein localises to the cell inner membrane. It carries out the reaction UDP-N-acetyl-alpha-D-muramoyl-L-alanyl-gamma-D-glutamyl-meso-2,6-diaminopimeloyl-D-alanyl-D-alanine + di-trans,octa-cis-undecaprenyl phosphate = di-trans,octa-cis-undecaprenyl diphospho-N-acetyl-alpha-D-muramoyl-L-alanyl-D-glutamyl-meso-2,6-diaminopimeloyl-D-alanyl-D-alanine + UMP. It functions in the pathway cell wall biogenesis; peptidoglycan biosynthesis. Its function is as follows. Catalyzes the initial step of the lipid cycle reactions in the biosynthesis of the cell wall peptidoglycan: transfers peptidoglycan precursor phospho-MurNAc-pentapeptide from UDP-MurNAc-pentapeptide onto the lipid carrier undecaprenyl phosphate, yielding undecaprenyl-pyrophosphoryl-MurNAc-pentapeptide, known as lipid I. The polypeptide is Phospho-N-acetylmuramoyl-pentapeptide-transferase (Vibrio cholerae serotype O1 (strain ATCC 39541 / Classical Ogawa 395 / O395)).